The following is a 459-amino-acid chain: Ribulose bisphosphate carboxylase large chain (459 aa).

Position 4 is an N6,N6,N6-trimethyllysine (Lys4). Asn113 and Thr163 together coordinate substrate. Lys165 serves as the catalytic Proton acceptor. Residue Lys167 coordinates substrate. 3 residues coordinate Mg(2+): Lys191, Asp193, and Glu194. Lys191 bears the N6-carboxylysine mark. His284 acts as the Proton acceptor in catalysis. Substrate-binding residues include Arg285, His317, and Ser369.

It belongs to the RuBisCO large chain family. Type I subfamily. Heterohexadecamer of 8 large chains and 8 small chains; disulfide-linked. The disulfide link is formed within the large subunit homodimers. It depends on Mg(2+) as a cofactor. The disulfide bond which can form in the large chain dimeric partners within the hexadecamer appears to be associated with oxidative stress and protein turnover.

Its subcellular location is the plastid. The protein localises to the chloroplast. The catalysed reaction is 2 (2R)-3-phosphoglycerate + 2 H(+) = D-ribulose 1,5-bisphosphate + CO2 + H2O. It carries out the reaction D-ribulose 1,5-bisphosphate + O2 = 2-phosphoglycolate + (2R)-3-phosphoglycerate + 2 H(+). In terms of biological role, ruBisCO catalyzes two reactions: the carboxylation of D-ribulose 1,5-bisphosphate, the primary event in carbon dioxide fixation, as well as the oxidative fragmentation of the pentose substrate in the photorespiration process. Both reactions occur simultaneously and in competition at the same active site. The polypeptide is Ribulose bisphosphate carboxylase large chain (Geum quellyon (Chilean avens)).